We begin with the raw amino-acid sequence, 203 residues long: Sperm-specific protein PHI-2B/PHI-3 (203 aa).

Basic residues predominate over residues 1–35 (MPSPSRKSRSRSRSRSKSPKRSPAKKARKTPKKPR). Disordered stretches follow at residues 1-46 (MPSP…PSTL) and 104-203 (KTSA…KSKK). One can recognise an H15 domain in the interval 41–120 (KKPSTLSMIV…GATGSFRVGK (80 aa)). Basic residues-rich tracts occupy residues 126–140 (KKAK…KSSK) and 147–203 (KAKK…KSKK).

In terms of processing, PL-II* and PL-IV are produced by post-translational cleavage of a common precursor. As to expression, sperm.

The protein localises to the nucleus. Its subcellular location is the chromosome. Functionally, linker histones are implicated in chromatin remodeling and/or transcriptional regulation during spermiogenesis, the process of spermatid maturation into spermatozoa. Protamines substitute for histones in the chromatin of sperm during the haploid phase of spermatogenesis. They compact sperm DNA into a highly condensed, stable and inactive complex. In Mytilus trossulus (Blue mussel), this protein is Sperm-specific protein PHI-2B/PHI-3.